We begin with the raw amino-acid sequence, 20 residues long: Alkaline phosphatase (20 aa).

Positions 1–20 (TDMLAVSVSSTDAIGHKYGT) are disordered.

Homodimer; may be disulfide-linked. The N-terminus is blocked.

It catalyses the reaction a phosphate monoester + H2O = an alcohol + phosphate. Its activity is regulated as follows. Completely inhibited by thiol-reducing agents, such as DTT and 2-mercaptoethanol. Activity was also inhibited by sodium orthovanadate, sodium molybdate, N-ethylmaleimide, EDTA and zinc ion, but was not inhibited by okadaic acid. Acts against tyrosine-phosphatases. This Prevotella intermedia protein is Alkaline phosphatase.